The following is a 398-amino-acid chain: Acetate kinase (398 aa).

Asn7 lines the Mg(2+) pocket. Lys14 contributes to the ATP binding site. Arg90 contributes to the substrate binding site. Asp147 serves as the catalytic Proton donor/acceptor. Residues 207–211, 282–284, and 330–334 contribute to the ATP site; these read HLGNG, DMR, and GIGEN. Glu383 is a Mg(2+) binding site.

The protein belongs to the acetokinase family. As to quaternary structure, homodimer. It depends on Mg(2+) as a cofactor. Mn(2+) serves as cofactor.

It localises to the cytoplasm. The catalysed reaction is acetate + ATP = acetyl phosphate + ADP. It participates in metabolic intermediate biosynthesis; acetyl-CoA biosynthesis; acetyl-CoA from acetate: step 1/2. Functionally, catalyzes the formation of acetyl phosphate from acetate and ATP. Can also catalyze the reverse reaction. The protein is Acetate kinase of Symbiobacterium thermophilum (strain DSM 24528 / JCM 14929 / IAM 14863 / T).